We begin with the raw amino-acid sequence, 450 residues long: UDP-N-acetylmuramoylalanine--D-glutamate ligase (450 aa).

119 to 125 (GSNGKTT) lines the ATP pocket.

This sequence belongs to the MurCDEF family.

The protein localises to the cytoplasm. It catalyses the reaction UDP-N-acetyl-alpha-D-muramoyl-L-alanine + D-glutamate + ATP = UDP-N-acetyl-alpha-D-muramoyl-L-alanyl-D-glutamate + ADP + phosphate + H(+). It participates in cell wall biogenesis; peptidoglycan biosynthesis. Functionally, cell wall formation. Catalyzes the addition of glutamate to the nucleotide precursor UDP-N-acetylmuramoyl-L-alanine (UMA). The polypeptide is UDP-N-acetylmuramoylalanine--D-glutamate ligase (Bacillus cereus (strain B4264)).